The chain runs to 389 residues: MELKGRTFLGYRRDNGRVGIRNHVIVLPVDDISNAAAEAVANNIKGTLALPHPYGRLQFGADLDLHFRTLIGTGCNPNVAAVIVIGIEPGWTGKVVDGIRATGKPVEGFWIEQNGDHNTIANASRKAREFVQYASELQREPCDVSELWVSTKCGESDTTSGCGANPTVGEAFDKLYEQGCTLVFGETSELTGGEHLVAARCANDDVRERFQAMFDRYSAMIDRHKTSDLSESQPTKGNIEGGLTTIEEKALGNIQKIGKRCRVDGVLDKAETPTGPGLWFMDSSSAAAEMVTLCAASGYVAHFFPTGQGNVIGNPILPVIKLCANPRTVRTMSEHIDVDVSGVLRREINLQEAGDQLLEMLLRTANGRHTNAEALGHREFVLTRLYESA.

Belongs to the UxaA family. In terms of assembly, (2R)-sulfolactate sulfo-lyase is composed of a SuyA and a SuyB subunit.

The protein resides in the cytoplasm. It catalyses the reaction (2R)-3-sulfolactate = sulfite + pyruvate + H(+). Its function is as follows. Together with SuyA, desulfonates sulfolactate to pyruvate and sulfite. The chain is (2R)-sulfolactate sulfo-lyase subunit beta (suyB) from Chromohalobacter salexigens (strain ATCC BAA-138 / DSM 3043 / CIP 106854 / NCIMB 13768 / 1H11).